A 443-amino-acid chain; its full sequence is Thymidine phosphorylase (443 aa).

The protein belongs to the thymidine/pyrimidine-nucleoside phosphorylase family. Homodimer.

It carries out the reaction thymidine + phosphate = 2-deoxy-alpha-D-ribose 1-phosphate + thymine. The protein operates within pyrimidine metabolism; dTMP biosynthesis via salvage pathway; dTMP from thymine: step 1/2. Functionally, the enzymes which catalyze the reversible phosphorolysis of pyrimidine nucleosides are involved in the degradation of these compounds and in their utilization as carbon and energy sources, or in the rescue of pyrimidine bases for nucleotide synthesis. The protein is Thymidine phosphorylase of Shewanella baltica (strain OS155 / ATCC BAA-1091).